The following is a 1521-amino-acid chain: uncharacterized protein (1521 aa).

5 disordered regions span residues 1-20, 85-124, 218-254, 431-482, and 735-797; these read MENN…NSNN, TFQS…NNNN, ASSP…SSSS, VLNS…TGIT, and NNNN…HQQQ. Composition is skewed to low complexity over residues 94–108, 219–254, and 431–454; these read NTSS…QNNP, SSPS…SSSS, and VLNS…NNTS. The span at 455-464 shows a compositional bias: polar residues; the sequence is PAIVTSASIH. 2 stretches are compositionally biased toward low complexity: residues 465 to 482 and 735 to 762; these read NSNG…TGIT and NNNN…NNIL. Residues 763–774 show a composition bias toward polar residues; it reads SNTLTSSLINEP. Residues 775-788 show a composition bias toward low complexity; sequence NQQHQHQQHQQQNQ. The stretch at 853–903 forms a coiled coil; that stretch reads IVNSQQQQQQQQQQQQQQQQQQQQQQQQQQQQQQQQQQQQQQHNNTQNINN. Residues 1398–1453 are compositionally biased toward low complexity; sequence QQPLPTSKTSSSSSSTSSEATPYLSSSVPPSIVTSTPSTTPMISSSNPNTSSLPTS. The disordered stretch occupies residues 1398-1455; sequence QQPLPTSKTSSSSSSTSSEATPYLSSSVPPSIVTSTPSTTPMISSSNPNTSSLPTSER.

This is an uncharacterized protein from Dictyostelium discoideum (Social amoeba).